We begin with the raw amino-acid sequence, 89 residues long: Small ribosomal subunit protein uS15 (89 aa).

The protein belongs to the universal ribosomal protein uS15 family. As to quaternary structure, part of the 30S ribosomal subunit. Forms a bridge to the 50S subunit in the 70S ribosome, contacting the 23S rRNA.

Its function is as follows. One of the primary rRNA binding proteins, it binds directly to 16S rRNA where it helps nucleate assembly of the platform of the 30S subunit by binding and bridging several RNA helices of the 16S rRNA. In terms of biological role, forms an intersubunit bridge (bridge B4) with the 23S rRNA of the 50S subunit in the ribosome. The protein is Small ribosomal subunit protein uS15 of Porphyromonas gingivalis (strain ATCC 33277 / DSM 20709 / CIP 103683 / JCM 12257 / NCTC 11834 / 2561).